The primary structure comprises 209 residues: Small ribosomal subunit protein eS1 (209 aa).

The protein belongs to the eukaryotic ribosomal protein eS1 family.

The polypeptide is Small ribosomal subunit protein eS1 (Picrophilus torridus (strain ATCC 700027 / DSM 9790 / JCM 10055 / NBRC 100828 / KAW 2/3)).